Reading from the N-terminus, the 145-residue chain is Small ribosomal subunit protein uS19 (145 aa).

Ala2 is modified (N-acetylalanine). A Glycyl lysine isopeptide (Lys-Gly) (interchain with G-Cter in SUMO2) cross-link involves residue Lys108.

It belongs to the universal ribosomal protein uS19 family. In terms of assembly, component of the small ribosomal subunit.

The protein localises to the cytoplasm. Component of the small ribosomal subunit. The ribosome is a large ribonucleoprotein complex responsible for the synthesis of proteins in the cell. The polypeptide is Small ribosomal subunit protein uS19 (RPS15) (Bos taurus (Bovine)).